The chain runs to 294 residues: Fructose-bisphosphate aldolase class 1 (294 aa).

The Proton acceptor role is filled by E176. Residue K213 is the Schiff-base intermediate with dihydroxyacetone-P of the active site.

This sequence belongs to the class I fructose-bisphosphate aldolase family.

The catalysed reaction is beta-D-fructose 1,6-bisphosphate = D-glyceraldehyde 3-phosphate + dihydroxyacetone phosphate. It participates in carbohydrate degradation; glycolysis; D-glyceraldehyde 3-phosphate and glycerone phosphate from D-glucose: step 4/4. This chain is Fructose-bisphosphate aldolase class 1, found in Oceanobacillus iheyensis (strain DSM 14371 / CIP 107618 / JCM 11309 / KCTC 3954 / HTE831).